The sequence spans 84 residues: Large ribosomal subunit protein bL31B (84 aa).

The protein belongs to the bacterial ribosomal protein bL31 family. Type B subfamily. As to quaternary structure, part of the 50S ribosomal subunit.

The polypeptide is Large ribosomal subunit protein bL31B (Rhodococcus erythropolis (strain PR4 / NBRC 100887)).